The chain runs to 423 residues: Elongation factor 1-alpha (423 aa).

Positions 5-211 (KEHINLAFIG…DNLEPPEKPT (207 aa)) constitute a tr-type G domain. Residues 14 to 21 (GHVDHGKS) are G1. 14 to 21 (GHVDHGKS) contributes to the GTP binding site. Serine 21 is a binding site for Mg(2+). A G2 region spans residues 60 to 64 (GVTID). Residues 81-84 (DCPG) form a G3 region. GTP is bound by residues 81–85 (DCPGH) and 136–139 (NKMD). The G4 stretch occupies residues 136-139 (NKMD). Positions 175-177 (SAF) are G5.

The protein belongs to the TRAFAC class translation factor GTPase superfamily. Classic translation factor GTPase family. EF-Tu/EF-1A subfamily.

The protein localises to the cytoplasm. The catalysed reaction is GTP + H2O = GDP + phosphate + H(+). GTP hydrolase that promotes the GTP-dependent binding of aminoacyl-tRNA to the A-site of ribosomes during protein biosynthesis. This is Elongation factor 1-alpha from Methanopyrus kandleri (strain AV19 / DSM 6324 / JCM 9639 / NBRC 100938).